A 271-amino-acid chain; its full sequence is Phosphonoacetaldehyde hydrolase (271 aa).

The active-site Nucleophile is the Asp-12. Residues Asp-12 and Ala-14 each contribute to the Mg(2+) site. Lys-54 (schiff-base intermediate with substrate) is an active-site residue. Asp-188 provides a ligand contact to Mg(2+).

This sequence belongs to the HAD-like hydrolase superfamily. PhnX family. Homodimer. Mg(2+) is required as a cofactor.

It carries out the reaction phosphonoacetaldehyde + H2O = acetaldehyde + phosphate + H(+). Functionally, involved in phosphonate degradation. The protein is Phosphonoacetaldehyde hydrolase of Vibrio parahaemolyticus serotype O3:K6 (strain RIMD 2210633).